The chain runs to 677 residues: WD repeat-containing protein 43 (677 aa).

WD repeat units follow at residues 11-51 (PLAP…LHQE), 57-119 (HLSG…LHSK), 124-163 (GHDN…VKCK), 166-205 (GDNS…RHFT), 207-259 (HATP…KEKS), and 267-309 (TDEP…YCKK). Position 77 is a phosphoserine (S77). Residue K309 forms a Glycyl lysine isopeptide (Lys-Gly) (interchain with G-Cter in SUMO1); alternate linkage. K309 is covalently cross-linked (Glycyl lysine isopeptide (Lys-Gly) (interchain with G-Cter in SUMO2); alternate). T321 carries the phosphothreonine modification. K384 participates in a covalent cross-link: Glycyl lysine isopeptide (Lys-Gly) (interchain with G-Cter in SUMO1); alternate. K384 is covalently cross-linked (Glycyl lysine isopeptide (Lys-Gly) (interchain with G-Cter in SUMO2); alternate). T394 carries the post-translational modification Phosphothreonine. 4 positions are modified to phosphoserine: S399, S431, S437, and S590. Disordered regions lie at residues 414–445 (AIKP…LGAM) and 582–677 (SEKT…SEEE). A compositionally biased stretch (polar residues) spans 582 to 592 (SEKTKGATSPG). Positions 600 to 652 (EEESSEEESDDEIADKDSEDNWDEDEEESESEKDEDVEEEDEDAEGKDEENGE) are enriched in acidic residues. Positions 653–663 (DRDTASEKELN) are enriched in basic and acidic residues. Residue T656 is modified to Phosphothreonine. Residue S658 is modified to Phosphoserine. The segment covering 664 to 677 (GDSDLDPENESEEE) has biased composition (acidic residues).

It belongs to the UTP5 family. As to quaternary structure, part of the small subunit (SSU) processome, composed of more than 70 proteins and the RNA chaperone small nucleolar RNA (snoRNA) U3. May be a component of the proposed t-UTP subcomplex of the ribosomal small subunit (SSU) processome containing at least UTP4, WDR43, HEATR1, UTP15, WDR75. Binds to RNA; binding is required for its chromatin association. Interacts with CDK9, DDX21 and SUPT6H. Interacts with RNA polymerase II. Interacts directly with UTP4 and UTP15.

The protein localises to the nucleus. Its subcellular location is the nucleolus. It localises to the nucleolus fibrillar center. The protein resides in the nucleoplasm. Functionally, ribosome biogenesis factor that coordinates hyperactive transcription and ribogenesis. Part of the small subunit (SSU) processome, first precursor of the small eukaryotic ribosomal subunit. During the assembly of the SSU processome in the nucleolus, many ribosome biogenesis factors, an RNA chaperone and ribosomal proteins associate with the nascent pre-rRNA and work in concert to generate RNA folding, modifications, rearrangements and cleavage as well as targeted degradation of pre-ribosomal RNA by the RNA exosome. Involved in nucleolar processing of pre-18S ribosomal RNA. Required for optimal pre-ribosomal RNA transcription by RNA polymerase I. Essential for stem cell pluripotency and embryonic development. In the nucleoplasm, recruited by promoter-associated/nascent transcripts and transcription to active promoters where it facilitates releases of elongation factor P-TEFb and paused RNA polymerase II to allow transcription elongation and maintain high-level expression of its targets genes. The polypeptide is WD repeat-containing protein 43 (Homo sapiens (Human)).